The primary structure comprises 414 residues: MAEPLRRRGPRSRGGRASRGARRARAARGRCPRAPRSPTRLIPDTVLVDLVSDSDEEVLEVVADPGEVPVARLPAPAAPEQDSDSDSEGAAEGPAGAPRTLVRRRRRLLDPGEAPVVPVYSGKVQSSLNLIPDNSSLLKLCPSEPEDEADLTDSGSPPSEDALPPGSPWKKKLRKKHEKEEKKMEEFPDQDISPLPQPSSRNKSRKHTEALQKLREVNKRLQDLRSCLSPKQHQSPALQNTDDEVVLVEGSVLPQNPRLFTLKIRCRADLVRLPVKTSEPLQNVVDHMASHLGVSPNRILLLFGETELSPTATPRTLKLGVADIIDCVVLASSSEDTETSQELRLRVQGKEKHQMLEISLSPDSPLKVLMSHYEEAMGLSGHKLSFFFDGTKLSGKELPTDLGLESGDLIEVWG.

The segment at 1–42 is disordered; the sequence is MAEPLRRRGPRSRGGRASRGARRARAARGRCPRAPRSPTRLI. Positions 7 to 33 are enriched in basic residues; sequence RRGPRSRGGRASRGARRARAARGRCPR. A phosphoserine mark is found at serine 52 and serine 54. The tract at residues 63–118 is disordered; that stretch reads ADPGEVPVARLPAPAAPEQDSDSDSEGAAEGPAGAPRTLVRRRRRLLDPGEAPVVP. Low complexity predominate over residues 68-79; it reads VPVARLPAPAAP. Serine 83, serine 85, and serine 87 each carry phosphoserine. The segment covering 90-100 has biased composition (low complexity); that stretch reads AAEGPAGAPRT. Phosphoserine is present on serine 121. A Glycyl lysine isopeptide (Lys-Gly) (interchain with G-Cter in SUMO2) cross-link involves residue lysine 123. The disordered stretch occupies residues 139–208; that stretch reads KLCPSEPEDE…SSRNKSRKHT (70 aa). Residues 170-229 adopt a coiled-coil conformation; it reads KKKLRKKHEKEEKKMEEFPDQDISPLPQPSSRNKSRKHTEALQKLREVNKRLQDLRSCLS. 3 positions are modified to phosphoserine: serine 193, serine 199, and serine 309. Threonine 311 and threonine 313 each carry phosphothreonine. The region spanning 343–414 is the Ubiquitin-like domain; sequence LRLRVQGKEK…ESGDLIEVWG (72 aa). Phosphoserine is present on residues serine 364 and serine 385.

Interacts with NFATC2, TRAF1, TRAF2 and PRMT1. Interacts with UBE2I/UBC9. Post-translationally, methylation at the N-terminus by PRMT1 modulates interaction with the NFAT complex and results in augmented cytokine production.

The protein resides in the nucleus. Its subcellular location is the cytoplasm. In terms of biological role, in T-helper 2 (Th2) cells, regulates the magnitude of NFAT-driven transcription of a specific subset of cytokine genes, including IL3, IL4, IL5 and IL13, but not IL2. Recruits PRMT1 to the IL4 promoter; this leads to enhancement of histone H4 'Arg-3'-methylation and facilitates subsequent histone acetylation at the IL4 locus, thus promotes robust cytokine expression. Down-regulates formation of poly-SUMO chains by UBE2I/UBC9. The polypeptide is NFATC2-interacting protein (Nfatc2ip) (Rattus norvegicus (Rat)).